A 420-amino-acid polypeptide reads, in one-letter code: MKLSAPLLVSLAAFSQAVTALVAFPGAEGFGADAIGGRKGQVYVVTNLNDSGTGSLRDAVSATDRIVVFAVGGVIKISERIVVSKRVTILGQTAPGDGITVYGNGWSFSNADDAIVRYIRIRMGKGGSSGKDAMGIAEGNRMIFDHVSVSWGRDETFSINGDASNITVQNSIIAQGLETHSCGGLIQTDGGVSLFRNLYIDNKTRNPKVKGVNEFTNNVVYNWGGGGGYIAGDSDGQSYANIIGNYFISGPSTSVTAFTRGNANFHGYVDNNYYDPDKDGQLDGSELGVSSSNYGGMAIVSSKYNYPAVAYTMSPAEAVTYVTKYAGASKVRDSVDTQLIAQVQSWGTKGALISDEATMGGPGTLNGGTPAKDTDGDGIPDEAEKQLGTDPNTNDSMKLHSSGYTYLEVWANSLVPSTYH.

Positions 1–20 (MKLSAPLLVSLAAFSQAVTA) are cleaved as a signal peptide. 3 N-linked (GlcNAc...) asparagine glycosylation sites follow: N49, N165, and N202. The active site involves R205. An EF-hand domain is found at 262–297 (NANFHGYVDNNYYDPDKDGQLDGSELGVSSSNYGGM). Residues D275, D277, D279, Q281, and E286 each coordinate Ca(2+). The tract at residues 357–395 (ATMGGPGTLNGGTPAKDTDGDGIPDEAEKQLGTDPNTND) is disordered. N-linked (GlcNAc...) asparagine glycosylation is present at N394.

This sequence belongs to the polysaccharide lyase 1 family. Ca(2+) is required as a cofactor.

Its subcellular location is the secreted. It catalyses the reaction Eliminative cleavage of (1-&gt;4)-alpha-D-galacturonan to give oligosaccharides with 4-deoxy-alpha-D-galact-4-enuronosyl groups at their non-reducing ends.. Its function is as follows. Pectinolytic enzyme consist of four classes of enzymes: pectin lyase, polygalacturonase, pectin methylesterase and rhamnogalacturonase. Among pectinolytic enzymes, pectin lyase is the most important in depolymerization of pectin, since it cleaves internal glycosidic bonds of highly methylated pectins. Favors pectate, the anion, over pectin, the methyl ester. This Neosartorya fischeri (strain ATCC 1020 / DSM 3700 / CBS 544.65 / FGSC A1164 / JCM 1740 / NRRL 181 / WB 181) (Aspergillus fischerianus) protein is Probable pectate lyase C (plyC).